The primary structure comprises 345 residues: Tubulin-folding cofactor C (345 aa).

M1 is subject to N-acetylmethionine. A compositionally biased stretch (polar residues) spans 1-10 (MEDDGQSSVA). The disordered stretch occupies residues 1–83 (MEDDGQSSVA…SRLASSSTDS (83 aa)). A compositionally biased stretch (basic and acidic residues) spans 23-39 (DMLERLSARHQARKSDS). Residues 40-55 (PDSSSSSSSTLESTSS) show a composition bias toward low complexity. A compositionally biased stretch (basic and acidic residues) spans 61–73 (SDSKRSIESRIAE). The span at 74–83 (SRLASSSTDS) shows a compositional bias: low complexity. Positions 169 to 318 (PPKLVPVRDS…NWANVDDFRW (150 aa)) constitute a C-CAP/cofactor C-like domain.

It belongs to the TBCC family. Supercomplex made of cofactors A to E. Cofactors A and D function by capturing and stabilizing tubulin in a quasi-native conformation. Cofactor E binds to the cofactor D-tubulin complex; interaction with cofactor C then causes the release of tubulin polypeptides that are committed to the native state. As to expression, ubiquitously expressed (at protein level). Present in leaves, roots, flowers, and stems.

It is found in the cytoplasm. In terms of biological role, essential tubulin-folding protein involved in the final step of the tubulin folding pathway. Required for continuous microtubule cytoskeleton organization, mitotic division, cytokinesis, and to couple cell cycle progression to cell division in embryos and endosperms. Not essential for cell viability. Binds probably to the multimeric supercomplex, stimulating GTP hydrolysis by the bound beta-tubulin and the release of the alpha-/beta-tubulin heterodimer. The chain is Tubulin-folding cofactor C (TFCC) from Arabidopsis thaliana (Mouse-ear cress).